We begin with the raw amino-acid sequence, 2167 residues long: Beige protein homolog 1 (2167 aa).

In terms of domain architecture, BEACH-type PH spans 1368-1499; that stretch reads KDNDSIATIW…VRDDVLRVLN (132 aa). The 295-residue stretch at 1545-1839 folds into the BEACH domain; it reads SANNSLIDGF…QIFQEPHPEK (295 aa). Lys1667 participates in a covalent cross-link: Glycyl lysine isopeptide (Lys-Gly) (interchain with G-Cter in ubiquitin). WD repeat units lie at residues 1927–1965, 1976–2015, 2017–2054, 2072–2111, and 2129–2167; these read THMA…HSVS, GHLC…LVRQ, TNDA…YTSK, KLDA…HNEW, and SIKG…AIWY.

The protein resides in the cytoplasm. The protein localises to the membrane. May be involved in protein sorting and cell wall formation. The protein is Beige protein homolog 1 (BPH1) of Saccharomyces cerevisiae (strain ATCC 204508 / S288c) (Baker's yeast).